The sequence spans 637 residues: MSWKLTKKLKDTHLAPLTNTFTRSSSTSTIKNESGEETPVVSQTPSISSTNSNGINASESLVSPPVDPVKPGILIVTLHEGRGFALSPHFQQVFTSHFQNNNYSSSVRPSSSSSHSTHGQTASFAQSGRPQSTSGGINAAPTIHGRYSTKYLPYALLDFEKNQVFVDAVSGTPENPLWAGDNTAFKFDVSRKTELNVQLYLRNPSARPGAGRSEDIFLGAVRVLPRFEEAQPYVDDPKLSKKDNQKAAAAHANNERHLGQLGAEWLDLQFGTGSIKIGVSFVENKQRSLKLEDFDLLKVVGKGSFGKVMQVMKKDTGRIYALKTIRKAHIISRSEVTHTLAERSVLAQINNPFIVPLKFSFQSPEKLYLVLAFVNGGELFHHLQREQRFDINRARFYTAELLCALECLHGFKVIYRDLKPENILLDYTGHIALCDFGLCKLDMKDEDRTNTFCGTPEYLAPELLLGNGYTKTVDWWTLGVLLYEMLTGLPPFYDENTNDMYRKILQEPLTFPSSDIVPPAARDLLTRLLDRDPQRRLGANGAAEIKSHHFFANIDWRKLLQRKYEPSFRPNVMGASDTTNFDTEFTSEAPQDSYVDGPVLSQTMQQQFAGWSYNRPVAGLGDAGGSVKDPSFGSIPE.

The span at T20–T29 shows a compositional bias: low complexity. Disordered stretches follow at residues T20 to S63 and S104 to A140. Over residues V40–L61 the composition is skewed to polar residues. Positions S104–S116 are enriched in low complexity. Over residues T117–G136 the composition is skewed to polar residues. The region spanning F294–F551 is the Protein kinase domain. Residues V300–V308 and K323 each bind ATP. D417 (proton acceptor) is an active-site residue. One can recognise an AGC-kinase C-terminal domain in the interval A552–A623. Residues S593 and S612 each carry the phosphoserine modification. Y613 is subject to Phosphotyrosine.

Belongs to the protein kinase superfamily. Ser/Thr protein kinase family. Interacts with the sakA MAP kinase.

It catalyses the reaction L-seryl-[protein] + ATP = O-phospho-L-seryl-[protein] + ADP + H(+). The enzyme catalyses L-threonyl-[protein] + ATP = O-phospho-L-threonyl-[protein] + ADP + H(+). Serine/threonine protein kinase required for vegetative growth and conidiation. Important for fungal survival through the regulation of glycosphingolipid (GSL) biosynthesis and cross talks with MAP kinase pathways such as the cell wall integrity (CWI) and the high osmolarity glycerol (HOG) pathways. This chain is Serine/threonine protein kinase ypkA, found in Aspergillus fumigatus (strain ATCC MYA-4609 / CBS 101355 / FGSC A1100 / Af293) (Neosartorya fumigata).